The primary structure comprises 141 residues: Hemoglobin subunit alpha (141 aa).

The Globin domain maps to 1–141 (VLSPADKTNV…VSTVLTSKYR (141 aa)). Phosphoserine is present on Ser3. Lys7 carries the N6-succinyllysine modification. A Phosphothreonine modification is found at Thr8. At Lys11 the chain carries N6-succinyllysine. The residue at position 16 (Lys16) is an N6-acetyllysine; alternate. An N6-succinyllysine; alternate modification is found at Lys16. The residue at position 24 (Tyr24) is a Phosphotyrosine. Lys40 carries the N6-succinyllysine modification. The residue at position 49 (Ser49) is a Phosphoserine. His58 provides a ligand contact to O2. Residue His87 participates in heme b binding. At Ser102 the chain carries Phosphoserine. The residue at position 108 (Thr108) is a Phosphothreonine. Ser124 carries the post-translational modification Phosphoserine. Phosphothreonine occurs at positions 134 and 137. The residue at position 138 (Ser138) is a Phosphoserine.

This sequence belongs to the globin family. In terms of assembly, heterotetramer of two alpha chains and two beta chains. Red blood cells.

Functionally, involved in oxygen transport from the lung to the various peripheral tissues. Its function is as follows. Hemopressin acts as an antagonist peptide of the cannabinoid receptor CNR1. Hemopressin-binding efficiently blocks cannabinoid receptor CNR1 and subsequent signaling. The sequence is that of Hemoglobin subunit alpha (HBA) from Phoca vitulina (Harbor seal).